A 938-amino-acid polypeptide reads, in one-letter code: Isoleucine--tRNA ligase (938 aa).

The 'HIGH' region motif lies at 58 to 68; sequence PYANGSIHIGH. E561 is an L-isoleucyl-5'-AMP binding site. A 'KMSKS' region motif is present at residues 602–606; sequence KMSKS. ATP is bound at residue K605. Zn(2+)-binding residues include C901, C904, C921, and C924.

The protein belongs to the class-I aminoacyl-tRNA synthetase family. IleS type 1 subfamily. As to quaternary structure, monomer. Zn(2+) is required as a cofactor.

It localises to the cytoplasm. It carries out the reaction tRNA(Ile) + L-isoleucine + ATP = L-isoleucyl-tRNA(Ile) + AMP + diphosphate. Its function is as follows. Catalyzes the attachment of isoleucine to tRNA(Ile). As IleRS can inadvertently accommodate and process structurally similar amino acids such as valine, to avoid such errors it has two additional distinct tRNA(Ile)-dependent editing activities. One activity is designated as 'pretransfer' editing and involves the hydrolysis of activated Val-AMP. The other activity is designated 'posttransfer' editing and involves deacylation of mischarged Val-tRNA(Ile). The protein is Isoleucine--tRNA ligase of Baumannia cicadellinicola subsp. Homalodisca coagulata.